Reading from the N-terminus, the 782-residue chain is E3 UFM1-protein ligase 1 homolog (782 aa).

Positions 405–478 (VSTQELEDDG…TRGGGGASKK (74 aa)) are disordered.

The protein belongs to the UFL1 family.

In terms of biological role, E3 UFM1-protein ligase that mediates ufmylation of target proteins. This chain is E3 UFM1-protein ligase 1 homolog, found in Drosophila simulans (Fruit fly).